A 196-amino-acid polypeptide reads, in one-letter code: Putative 3-methyladenine DNA glycosylase (196 aa).

The protein belongs to the DNA glycosylase MPG family.

This chain is Putative 3-methyladenine DNA glycosylase, found in Chlorobium luteolum (strain DSM 273 / BCRC 81028 / 2530) (Pelodictyon luteolum).